Reading from the N-terminus, the 356-residue chain is uncharacterized protein (356 aa).

The tract at residues 25 to 72 (EENNQENNKKFIEEFYPDKESDKNFSDDDSDDSDDSDDSENSDEEFDN) is disordered. Residues 31–50 (NNKKFIEEFYPDKESDKNFS) are compositionally biased toward basic and acidic residues. A compositionally biased stretch (acidic residues) spans 51–70 (DDDSDDSDDSDDSENSDEEF). A coiled-coil region spans residues 328–356 (EDTLNHSHSNKIKELENKITELKYQNEIN).

Belongs to the mimivirus L17/R827 family.

This is an uncharacterized protein from Acanthamoeba polyphaga mimivirus (APMV).